The primary structure comprises 349 residues: Flap endonuclease 1 (349 aa).

An N-domain region spans residues 1–102; sequence MGVTELGKLI…AEIEARRRVK (102 aa). Mg(2+) is bound by residues Asp-31, Asp-84, Glu-156, Glu-158, Asp-177, Asp-179, and Asp-239. The I-domain stretch occupies residues 120-261; that stretch reads DVAKYMKRVI…KALKLVLEFG (142 aa).

This sequence belongs to the XPG/RAD2 endonuclease family. FEN1 subfamily. Interacts with PCNA. PCNA stimulates the nuclease activity without altering cleavage specificity. Mg(2+) serves as cofactor.

Structure-specific nuclease with 5'-flap endonuclease and 5'-3' exonuclease activities involved in DNA replication and repair. During DNA replication, cleaves the 5'-overhanging flap structure that is generated by displacement synthesis when DNA polymerase encounters the 5'-end of a downstream Okazaki fragment. Binds the unpaired 3'-DNA end and kinks the DNA to facilitate 5' cleavage specificity. Cleaves one nucleotide into the double-stranded DNA from the junction in flap DNA, leaving a nick for ligation. Also involved in the base excision repair (BER) pathway. Acts as a genome stabilization factor that prevents flaps from equilibrating into structures that lead to duplications and deletions. Also possesses 5'-3' exonuclease activity on nicked or gapped double-stranded DNA. The protein is Flap endonuclease 1 of Pyrobaculum neutrophilum (strain DSM 2338 / JCM 9278 / NBRC 100436 / V24Sta) (Thermoproteus neutrophilus).